The following is a 364-amino-acid chain: UDP-N-acetylglucosamine--N-acetylmuramyl-(pentapeptide) pyrophosphoryl-undecaprenol N-acetylglucosamine transferase (364 aa).

Residues 10-12 (TGG), N124, S195, I250, and Q295 each bind UDP-N-acetyl-alpha-D-glucosamine.

This sequence belongs to the glycosyltransferase 28 family. MurG subfamily.

Its subcellular location is the cell membrane. The enzyme catalyses di-trans,octa-cis-undecaprenyl diphospho-N-acetyl-alpha-D-muramoyl-L-alanyl-D-glutamyl-meso-2,6-diaminopimeloyl-D-alanyl-D-alanine + UDP-N-acetyl-alpha-D-glucosamine = di-trans,octa-cis-undecaprenyl diphospho-[N-acetyl-alpha-D-glucosaminyl-(1-&gt;4)]-N-acetyl-alpha-D-muramoyl-L-alanyl-D-glutamyl-meso-2,6-diaminopimeloyl-D-alanyl-D-alanine + UDP + H(+). It functions in the pathway cell wall biogenesis; peptidoglycan biosynthesis. In terms of biological role, cell wall formation. Catalyzes the transfer of a GlcNAc subunit on undecaprenyl-pyrophosphoryl-MurNAc-pentapeptide (lipid intermediate I) to form undecaprenyl-pyrophosphoryl-MurNAc-(pentapeptide)GlcNAc (lipid intermediate II). The sequence is that of UDP-N-acetylglucosamine--N-acetylmuramyl-(pentapeptide) pyrophosphoryl-undecaprenol N-acetylglucosamine transferase from Bacillus cytotoxicus (strain DSM 22905 / CIP 110041 / 391-98 / NVH 391-98).